Reading from the N-terminus, the 726-residue chain is Prolyl endopeptidase-like (726 aa).

At S138 the chain carries Phosphoserine. Residues S558, D644, and H689 each act as charge relay system in the active site.

Belongs to the peptidase S9A family. As to quaternary structure, homodimer. Interacts with the AP-1 complex.

The protein resides in the cytoplasm. Its subcellular location is the cytosol. It is found in the golgi apparatus. It localises to the trans-Golgi network. The protein localises to the cytoskeleton. The protein resides in the nucleus. Functionally, serine peptidase whose precise substrate specificity remains unclear. Does not cleave peptides after a arginine or lysine residue. Regulates trans-Golgi network morphology and sorting by regulating the membrane binding of the AP-1 complex. May play a role in the regulation of synaptic vesicle exocytosis. The protein is Prolyl endopeptidase-like (Prepl) of Rattus norvegicus (Rat).